The following is a 284-amino-acid chain: tRNA N(3)-cytidine methyltransferase METTL6 (284 aa).

S-adenosyl-L-methionine is bound by residues tryptophan 45 and tyrosine 49. S-adenosyl-L-homocysteine-binding residues include tyrosine 49, histidine 61, glutamate 85, glycine 87, aspartate 110, aspartate 136, leucine 137, and isoleucine 157. 5 residues coordinate S-adenosyl-L-methionine: glycine 87, aspartate 110, aspartate 136, leucine 137, and isoleucine 157.

The protein belongs to the methyltransferase superfamily. METL family. In terms of assembly, monomer. Interacts with SARS1/SerRS; interaction is mediated via tRNA(Ser) and is required for N(3)-methylcytidine methylation.

It localises to the cytoplasm. The protein resides in the nucleus. The catalysed reaction is cytidine(32) in tRNA(Ser) + S-adenosyl-L-methionine = N(3)-methylcytidine(32) in tRNA(Ser) + S-adenosyl-L-homocysteine + H(+). Its function is as follows. S-adenosyl-L-methionine-dependent methyltransferase that mediates N(3)-methylcytidine modification of residue 32 of the tRNA anticodon loop of tRNA(Ser), including tRNA(Ser)(UGA) and tRNA(Ser)(GCU). Interaction with SARS1/SerRS is required for N(3)-methylcytidine methylation. This chain is tRNA N(3)-cytidine methyltransferase METTL6, found in Homo sapiens (Human).